The chain runs to 469 residues: ATP synthase subunit beta (469 aa).

Residue 157-164 coordinates ATP; it reads GGAGVGKT.

This sequence belongs to the ATPase alpha/beta chains family. F-type ATPases have 2 components, CF(1) - the catalytic core - and CF(0) - the membrane proton channel. CF(1) has five subunits: alpha(3), beta(3), gamma(1), delta(1), epsilon(1). CF(0) has three main subunits: a(1), b(2) and c(9-12). The alpha and beta chains form an alternating ring which encloses part of the gamma chain. CF(1) is attached to CF(0) by a central stalk formed by the gamma and epsilon chains, while a peripheral stalk is formed by the delta and b chains.

The protein resides in the cell membrane. The catalysed reaction is ATP + H2O + 4 H(+)(in) = ADP + phosphate + 5 H(+)(out). Functionally, produces ATP from ADP in the presence of a proton gradient across the membrane. The catalytic sites are hosted primarily by the beta subunits. The chain is ATP synthase subunit beta from Brevibacillus brevis (strain 47 / JCM 6285 / NBRC 100599).